Reading from the N-terminus, the 710-residue chain is Polyribonucleotide nucleotidyltransferase (710 aa).

Mg(2+)-binding residues include Asp-487 and Asp-493. The region spanning 554-613 (PRIHTMKISAEKIKDVIGKGGAVIRALTEETGTTIEIEDDGTIKIAATEGAAAKEAIRRI) is the KH domain. The S1 motif domain maps to 623–691 (GRIYTGKVAR…RQGRVRLSMK (69 aa)). Residues 691-710 (KEAVEKPAEEANDASEAKGE) form a disordered region.

Belongs to the polyribonucleotide nucleotidyltransferase family. Component of the RNA degradosome, which is a multiprotein complex involved in RNA processing and mRNA degradation. Requires Mg(2+) as cofactor.

The protein resides in the cytoplasm. The catalysed reaction is RNA(n+1) + phosphate = RNA(n) + a ribonucleoside 5'-diphosphate. In terms of biological role, involved in mRNA degradation. Catalyzes the phosphorolysis of single-stranded polyribonucleotides processively in the 3'- to 5'-direction. This Vibrio campbellii (strain ATCC BAA-1116) protein is Polyribonucleotide nucleotidyltransferase.